The following is a 239-amino-acid chain: Ion-translocating oxidoreductase complex subunit E (239 aa).

Helical transmembrane passes span 41-61 (LGLGLATLLVLVCSNAAVSLV), 71-91 (LPAFVMIIAALTTCIELLMQA), 95-115 (ELYQILGIFIPLITTNCVILG), 130-150 (SFDGLLTGLGFALVLLVLGGL), and 184-204 (GFLLAILPPGAFIMLGLLIAL).

This sequence belongs to the NqrDE/RnfAE family. In terms of assembly, the complex is composed of six subunits: RnfA, RnfB, RnfC, RnfD, RnfE and RnfG.

Its subcellular location is the cell inner membrane. In terms of biological role, part of a membrane-bound complex that couples electron transfer with translocation of ions across the membrane. The protein is Ion-translocating oxidoreductase complex subunit E of Pseudomonas paraeruginosa (strain DSM 24068 / PA7) (Pseudomonas aeruginosa (strain PA7)).